Consider the following 148-residue polypeptide: Cathelicidin-1 (148 aa).

The signal sequence occupies residues 1 to 17; sequence MLSCWVLLLALLGGACA. The propeptide occupies 18–122; that stretch reads LPAPLGYSQA…TCVDSMADPV (105 aa). Intrachain disulfides connect C75/C86 and C97/C114.

Belongs to the cathelicidin family. Detected in gizzard, liver, small intestine, large intestine, cloaca, bursa of Fabricius, gall bladder, lung, trachea, kidney, testis and bone marrow.

The protein resides in the secreted. In terms of biological role, binds bacterial lipopolysaccharide (LPS). Has potent antimicrobial activity against Gram-positive and Gram-negative bacteria (in vitro). Has hemolytic activity (in vitro). May play a role in the innate immune response. The chain is Cathelicidin-1 (CATHL1) from Gallus gallus (Chicken).